Here is a 213-residue protein sequence, read N- to C-terminus: Carboxysome shell protein CcmP (213 aa).

BMC circularly permuted domains are found at residues 4–106 (ELRS…RLKP) and 107–211 (KIVS…GDRS). The Probably important for pore gating motif lies at 69-70 (ER).

This sequence belongs to the EutL/PduB family. A dimer of stacked trimers, the same faces interact.

The protein localises to the carboxysome. In terms of biological role, probably part of the carboxysome shell, a polyhedral inclusion where RuBisCO (ribulose bisphosphate carboxylase, rbcL-rbcS) is sequestered. It is thought that this protein controls transport of RuBisCO reactants in and out of the carboxysome; residual densities in the 4 X-ray structures suggest that differing compounds bind in interior pockets, depending on the open or closed state of the pore. This is Carboxysome shell protein CcmP from Synechococcus elongatus (strain ATCC 33912 / PCC 7942 / FACHB-805) (Anacystis nidulans R2).